Reading from the N-terminus, the 100-residue chain is Protein SAMBA (100 aa).

The segment at 1 to 40 (MNGASPAHSLVSTTAVAGGGGSSGAAAGLDDFHFPPDIPS) is disordered.

In terms of assembly, interacts with CDC27B and CYCA2-3. In terms of tissue distribution, expressed in embryos, germinating seeds, hypocotyls and pollen grains.

Functionally, plays an important role in organ size control. Acts as negative regulator of the anaphase-promoting complex/cyclosome (APC/C). Regulates cell proliferation during early development by targeting CYCA2-3 for APC/C-mediated degradation. Required for mitosis I during pollen microspore development. This chain is Protein SAMBA, found in Arabidopsis thaliana (Mouse-ear cress).